The sequence spans 51 residues: Large ribosomal subunit protein bL33 (51 aa).

It belongs to the bacterial ribosomal protein bL33 family.

The sequence is that of Large ribosomal subunit protein bL33 from Idiomarina loihiensis (strain ATCC BAA-735 / DSM 15497 / L2-TR).